The primary structure comprises 338 residues: Lipoate-protein ligase A (338 aa).

Residues 29-216 (PATQRVLFLW…AFFSHYGERV (188 aa)) form the BPL/LPL catalytic domain. Residues R71, 76-79 (GAVF), and K134 contribute to the ATP site. K134 contacts (R)-lipoate.

The protein belongs to the LplA family. Monomer.

The protein resides in the cytoplasm. The catalysed reaction is L-lysyl-[lipoyl-carrier protein] + (R)-lipoate + ATP = N(6)-[(R)-lipoyl]-L-lysyl-[lipoyl-carrier protein] + AMP + diphosphate + H(+). It participates in protein modification; protein lipoylation via exogenous pathway; protein N(6)-(lipoyl)lysine from lipoate: step 1/2. Its pathway is protein modification; protein lipoylation via exogenous pathway; protein N(6)-(lipoyl)lysine from lipoate: step 2/2. Its function is as follows. Catalyzes both the ATP-dependent activation of exogenously supplied lipoate to lipoyl-AMP and the transfer of the activated lipoyl onto the lipoyl domains of lipoate-dependent enzymes. In Klebsiella pneumoniae subsp. pneumoniae (strain ATCC 700721 / MGH 78578), this protein is Lipoate-protein ligase A.